Consider the following 82-residue polypeptide: Immediate early response 3-interacting protein 1 (82 aa).

Transmembrane regions (helical) follow at residues 2–22 and 62–82; these read AFTL…IAVL and VMRV…LLFG.

The protein belongs to the YOS1 family.

It localises to the endoplasmic reticulum membrane. Regulator of endoplasmic reticulum secretion that acts as a key determinant of brain size. Required for secretion of extracellular matrix proteins. Required for correct brain development by depositing sufficient extracellular matrix proteins for tissue integrity and the proliferation of neural progenitors. Acts as a regulator of the unfolded protein response (UPR). The protein is Immediate early response 3-interacting protein 1 of Danio rerio (Zebrafish).